We begin with the raw amino-acid sequence, 360 residues long: Ferredoxin--NADP reductase 1 (360 aa).

Residues D43, Q51, Y56, A96, F141, D307, and S348 each coordinate FAD.

The protein belongs to the ferredoxin--NADP reductase type 2 family. Homodimer. FAD is required as a cofactor.

It catalyses the reaction 2 reduced [2Fe-2S]-[ferredoxin] + NADP(+) + H(+) = 2 oxidized [2Fe-2S]-[ferredoxin] + NADPH. The chain is Ferredoxin--NADP reductase 1 from Cupriavidus taiwanensis (strain DSM 17343 / BCRC 17206 / CCUG 44338 / CIP 107171 / LMG 19424 / R1) (Ralstonia taiwanensis (strain LMG 19424)).